We begin with the raw amino-acid sequence, 842 residues long: DNA mismatch repair protein MutS (842 aa).

596–603 lines the ATP pocket; it reads GPNMSGKS.

This sequence belongs to the DNA mismatch repair MutS family.

Its function is as follows. This protein is involved in the repair of mismatches in DNA. It is possible that it carries out the mismatch recognition step. This protein has a weak ATPase activity. This Exiguobacterium sp. (strain ATCC BAA-1283 / AT1b) protein is DNA mismatch repair protein MutS.